The sequence spans 342 residues: Replication factor C subunit 3 (342 aa).

63–70 contributes to the ATP binding site; it reads GPPGTGKT.

This sequence belongs to the activator 1 small subunits family. In terms of assembly, heteropentamer of subunits rfc1, rfc2, rfc3, rfc4 and rfc5 that forms a complex (RFC) with PCNA in the presence of ATP. Two other complexes exist where rfc1 can be replaced by either ctf18 or elg1 to form the ctf18-RFC or the elg1-RFC complexes respectively.

It localises to the nucleus. Functionally, the elongation of primed DNA templates by DNA polymerase delta and epsilon requires the action of the accessory proteins PCNA and activator 1. Subunit 3 binds ATP. Also involved in replication and DNA damage checkpoint controls, probably functioning as a checkpoint sensor. In Schizosaccharomyces pombe (strain 972 / ATCC 24843) (Fission yeast), this protein is Replication factor C subunit 3 (rfc3).